Reading from the N-terminus, the 199-residue chain is Pyridoxine/pyridoxamine 5'-phosphate oxidase (199 aa).

Residues 44-49 (RTVLLK), 59-60 (YT), Lys66, and Gln91 contribute to the FMN site. Lys49 contributes to the substrate binding site. 3 residues coordinate substrate: Tyr109, Arg113, and Ser117. FMN-binding positions include 126–127 (QS) and Trp171. 177 to 179 (RLH) lines the substrate pocket. An FMN-binding site is contributed by Arg181.

This sequence belongs to the pyridoxamine 5'-phosphate oxidase family. As to quaternary structure, homodimer. Requires FMN as cofactor.

It carries out the reaction pyridoxamine 5'-phosphate + O2 + H2O = pyridoxal 5'-phosphate + H2O2 + NH4(+). It catalyses the reaction pyridoxine 5'-phosphate + O2 = pyridoxal 5'-phosphate + H2O2. It participates in cofactor metabolism; pyridoxal 5'-phosphate salvage; pyridoxal 5'-phosphate from pyridoxamine 5'-phosphate: step 1/1. The protein operates within cofactor metabolism; pyridoxal 5'-phosphate salvage; pyridoxal 5'-phosphate from pyridoxine 5'-phosphate: step 1/1. Functionally, catalyzes the oxidation of either pyridoxine 5'-phosphate (PNP) or pyridoxamine 5'-phosphate (PMP) into pyridoxal 5'-phosphate (PLP). In Xanthomonas axonopodis pv. citri (strain 306), this protein is Pyridoxine/pyridoxamine 5'-phosphate oxidase.